Reading from the N-terminus, the 180-residue chain is Bifunctional protein PyrR (180 aa).

The PRPP-binding signature appears at 101-113 (VVLVDDVIFKGRT).

It belongs to the purine/pyrimidine phosphoribosyltransferase family. PyrR subfamily.

It carries out the reaction UMP + diphosphate = 5-phospho-alpha-D-ribose 1-diphosphate + uracil. In terms of biological role, regulates the transcription of the pyrimidine nucleotide (pyr) operon in response to exogenous pyrimidines. Its function is as follows. Also displays a weak uracil phosphoribosyltransferase activity which is not physiologically significant. This is Bifunctional protein PyrR from Trichormus variabilis (strain ATCC 29413 / PCC 7937) (Anabaena variabilis).